A 210-amino-acid polypeptide reads, in one-letter code: RNA chaperone ProQ (210 aa).

2 stretches are compositionally biased toward basic and acidic residues: residues 103-124 and 132-144; these read LKES…EKAK and RKAD…DKPK. The disordered stretch occupies residues 103-148; the sequence is LKESKERVFASRRTNNKEEKAKQPRRPAPRKADAAAKSDKPKAAPK.

It belongs to the ProQ family.

The protein resides in the cytoplasm. In terms of biological role, RNA chaperone with significant RNA binding, RNA strand exchange and RNA duplexing activities. The sequence is that of RNA chaperone ProQ from Aeromonas salmonicida (strain A449).